Consider the following 443-residue polypeptide: Methyl-coenzyme M reductase subunit beta (443 aa).

Residue Tyr-367 coordinates coenzyme M. Gly-369 serves as a coordination point for coenzyme B.

This sequence belongs to the methyl-coenzyme M reductase beta subunit family. As to quaternary structure, MCR is a hexamer of two alpha, two beta, and two gamma chains, forming a dimer of heterotrimers. Requires coenzyme F430 as cofactor.

The protein localises to the cytoplasm. It carries out the reaction coenzyme B + methyl-coenzyme M = methane + coenzyme M-coenzyme B heterodisulfide. It participates in one-carbon metabolism; methyl-coenzyme M reduction; methane from methyl-coenzyme M: step 1/1. In terms of biological role, component of the methyl-coenzyme M reductase (MCR) I that catalyzes the reductive cleavage of methyl-coenzyme M (CoM-S-CH3 or 2-(methylthio)ethanesulfonate) using coenzyme B (CoB or 7-mercaptoheptanoylthreonine phosphate) as reductant which results in the production of methane and the mixed heterodisulfide of CoB and CoM (CoM-S-S-CoB). This is the final step in methanogenesis. This is Methyl-coenzyme M reductase subunit beta (mcrB) from Methanococcus vannielii.